Here is a 522-residue protein sequence, read N- to C-terminus: MQRAAVLVRRGSCPRASGPWGRSHSSAAAEASAALKVRPERSPRDRILTLESMNPQVKAVEYAVRGPIVLKAGEIEMELQRGIKKPFTEVIRANIGDAHAMGQQPITFLRQVMALCTYPNLLNSPSFPEDAKKRARRILQACGGNSLGSYSASQGVNCIREDVAAFITRRDGVPADPDNIYLTTGASDGISTILKLLVSGGGKSRTGVMIPIPQYPLYSAVISELDAVQVNYYLDEENCWALNVDELRRALRQAKDHCDPKVLCIINPGNPTGQVQSRKCIEDVIHFAWEEKLFLLADEVYQDNVYSPDCRFHSFKKVLYQMGHEYSSNVELASFHSTSKGYMGECGYRGGYMEVINLHPEIKGQLVKLLSVRLCPPVSGQAAMDIVVNPPEPGEESFEQFSREKEFVLGNLAKKAKLTEDLFNQVPGIQCNPLQGAMYAFPRILIPAKAVEAAQSHKMAPDMFYCMKLLEETGICVVPGSGFGQREGTYHFRMTILPPVDKLKTVLHKVKDFHLKFLEQYS.

K340 is subject to N6-(pyridoxal phosphate)lysine. An N6-acetyllysine mark is found at K414, K504, and K511.

Belongs to the class-I pyridoxal-phosphate-dependent aminotransferase family. Alanine aminotransferase subfamily. Homodimer. It depends on pyridoxal 5'-phosphate as a cofactor. In terms of tissue distribution, specifically induced in fatty liver. Highly expressed in muscle, liver and white adipose tissue. Moderately expressed in brain and kidney and expressed at low levels in the heart.

It catalyses the reaction L-alanine + 2-oxoglutarate = pyruvate + L-glutamate. It functions in the pathway amino-acid degradation; L-alanine degradation via transaminase pathway; pyruvate from L-alanine: step 1/1. Functionally, catalyzes the reversible transamination between alanine and 2-oxoglutarate to form pyruvate and glutamate. This Mus musculus (Mouse) protein is Alanine aminotransferase 2 (Gpt2).